Consider the following 265-residue polypeptide: Energy-coupling factor transporter ATP-binding protein EcfA1 (265 aa).

One can recognise an ABC transporter domain in the interval 2–236 (IKIKNLVFRY…KEIVELAKID (235 aa)). An ATP-binding site is contributed by 36–43 (GHNGSGKS).

It belongs to the ABC transporter superfamily. Energy-coupling factor EcfA family. Forms a stable energy-coupling factor (ECF) transporter complex composed of 2 membrane-embedded substrate-binding proteins (S component), 2 ATP-binding proteins (A component) and 2 transmembrane proteins (T component).

Its subcellular location is the cell membrane. Functionally, ATP-binding (A) component of a common energy-coupling factor (ECF) ABC-transporter complex. Unlike classic ABC transporters this ECF transporter provides the energy necessary to transport a number of different substrates. The chain is Energy-coupling factor transporter ATP-binding protein EcfA1 from Mycoplasmopsis pulmonis (strain UAB CTIP) (Mycoplasma pulmonis).